We begin with the raw amino-acid sequence, 429 residues long: GDP-fucose protein O-fucosyltransferase 2 (429 aa).

The signal sequence occupies residues 1–21 (MATLSFVFLLLGAVSWPPASA). 53–57 (PEGFN) contacts GDP-beta-L-fucose. The active-site Proton acceptor is the Glu-54. Residues Cys-161 and Cys-192 are joined by a disulfide bond. N-linked (GlcNAc...) asparagine glycosylation is found at Asn-189, Asn-209, and Asn-259. Residues 292-294 (HLR), Asp-371, and 388-389 (TF) contribute to the GDP-beta-L-fucose site. Cys-412 and Cys-419 form a disulfide bridge.

Belongs to the glycosyltransferase 68 family.

Its subcellular location is the endoplasmic reticulum. It is found in the golgi apparatus. The catalysed reaction is L-seryl-[protein] + GDP-beta-L-fucose = 3-O-(alpha-L-fucosyl)-L-seryl-[protein] + GDP + H(+). It carries out the reaction L-threonyl-[protein] + GDP-beta-L-fucose = 3-O-(alpha-L-fucosyl)-L-threonyl-[protein] + GDP + H(+). It functions in the pathway protein modification; protein glycosylation. In terms of biological role, catalyzes the reaction that attaches fucose through an O-glycosidic linkage to a conserved serine or threonine residue in the consensus sequence C1-X-X-S/T-C2 of thrombospondin type I repeats (TSRs) where C1 and C2 are the first and second cysteines of the repeat, respectively. O-fucosylates members of several protein families including the ADAMTS, the thrombospondin (TSP) and spondin families. Required for the proper secretion of ADAMTS family members such as ADAMTSL1 and ADAMTS13. The O-fucosylation of TSRs is also required for restricting epithelial to mesenchymal transition (EMT), maintaining the correct patterning of mesoderm and localization of the definite endoderm. The protein is GDP-fucose protein O-fucosyltransferase 2 (POFUT2) of Pan troglodytes (Chimpanzee).